The following is a 79-amino-acid chain: Putative membrane protein insertion efficiency factor (79 aa).

It belongs to the UPF0161 family.

The protein resides in the cell inner membrane. Could be involved in insertion of integral membrane proteins into the membrane. In Rippkaea orientalis (strain PCC 8801 / RF-1) (Cyanothece sp. (strain PCC 8801)), this protein is Putative membrane protein insertion efficiency factor.